The sequence spans 883 residues: Phosphoenolpyruvate carboxylase (883 aa).

Catalysis depends on residues His-138 and Lys-546.

Belongs to the PEPCase type 1 family. Requires Mg(2+) as cofactor.

The enzyme catalyses oxaloacetate + phosphate = phosphoenolpyruvate + hydrogencarbonate. Forms oxaloacetate, a four-carbon dicarboxylic acid source for the tricarboxylic acid cycle. The chain is Phosphoenolpyruvate carboxylase from Salmonella schwarzengrund (strain CVM19633).